The sequence spans 139 residues: S-adenosylmethionine decarboxylase proenzyme (139 aa).

Ser-63 acts as the Schiff-base intermediate with substrate; via pyruvic acid in catalysis. A Pyruvic acid (Ser); by autocatalysis modification is found at Ser-63. Residue His-68 is the Proton acceptor; for processing activity of the active site. Residue Cys-83 is the Proton donor; for catalytic activity of the active site.

This sequence belongs to the prokaryotic AdoMetDC family. Type 1 subfamily. As to quaternary structure, heterotetramer of two alpha and two beta chains arranged as a dimer of alpha/beta heterodimers. Requires pyruvate as cofactor. In terms of processing, is synthesized initially as an inactive proenzyme. Formation of the active enzyme involves a self-maturation process in which the active site pyruvoyl group is generated from an internal serine residue via an autocatalytic post-translational modification. Two non-identical subunits are generated from the proenzyme in this reaction, and the pyruvate is formed at the N-terminus of the alpha chain, which is derived from the carboxyl end of the proenzyme. The post-translation cleavage follows an unusual pathway, termed non-hydrolytic serinolysis, in which the side chain hydroxyl group of the serine supplies its oxygen atom to form the C-terminus of the beta chain, while the remainder of the serine residue undergoes an oxidative deamination to produce ammonia and the pyruvoyl group blocking the N-terminus of the alpha chain.

It catalyses the reaction S-adenosyl-L-methionine + H(+) = S-adenosyl 3-(methylsulfanyl)propylamine + CO2. Its pathway is amine and polyamine biosynthesis; S-adenosylmethioninamine biosynthesis; S-adenosylmethioninamine from S-adenosyl-L-methionine: step 1/1. In terms of biological role, catalyzes the decarboxylation of S-adenosylmethionine to S-adenosylmethioninamine (dcAdoMet), the propylamine donor required for the synthesis of the polyamines spermine and spermidine from the diamine putrescine. The sequence is that of S-adenosylmethionine decarboxylase proenzyme from Pyrococcus horikoshii (strain ATCC 700860 / DSM 12428 / JCM 9974 / NBRC 100139 / OT-3).